The following is a 231-amino-acid chain: Somatolactin-2 (231 aa).

The first 24 residues, 1–24, serve as a signal peptide directing secretion; it reads MRMMRAIKQGQWAILLWPYLLTTS. 3 cysteine pairs are disulfide-bonded: C29–C39, C89–C205, and C222–C230. N145 carries an N-linked (GlcNAc...) asparagine glycan.

Belongs to the somatotropin/prolactin family. In terms of tissue distribution, pituitary gland.

The protein resides in the secreted. The polypeptide is Somatolactin-2 (Sparus aurata (Gilthead sea bream)).